A 67-amino-acid polypeptide reads, in one-letter code: Type 3 secretion system chaperone PscE (67 aa).

A coiled-coil region spans residues histidine 16 to arginine 37.

The protein belongs to the YscE family. As to quaternary structure, forms a stable ternary complex with PscF/SctF and PscG within the cytoplasm. Co-stabilized by PscG.

The protein resides in the cytoplasm. Its function is as follows. Chaperone of the type III secretion system (T3SS), also called injectisome, which is used to inject bacterial effector proteins into eukaryotic host cells, facilitating the establishment and dissemination of infection. Along with PscG, prevents premature polymerization of the PscF/SctF needle protein within the cytoplasm. Required for type III secretion needle assembly. Also required for cytotoxicity by influencing PscF/SctF levels. The sequence is that of Type 3 secretion system chaperone PscE (pscE) from Pseudomonas aeruginosa (strain ATCC 15692 / DSM 22644 / CIP 104116 / JCM 14847 / LMG 12228 / 1C / PRS 101 / PAO1).